A 379-amino-acid chain; its full sequence is Homoserine O-succinyltransferase (379 aa).

In terms of domain architecture, AB hydrolase-1 spans 51-360; the sequence is NAVLICHALS…DAPQGHDAFL (310 aa). The active-site Nucleophile is S157. Position 227 (R227) interacts with substrate. Residues D323 and H356 contribute to the active site. Substrate is bound at residue D357.

This sequence belongs to the AB hydrolase superfamily. MetX family. In terms of assembly, homodimer.

It localises to the cytoplasm. The enzyme catalyses L-homoserine + succinyl-CoA = O-succinyl-L-homoserine + CoA. It functions in the pathway amino-acid biosynthesis; L-methionine biosynthesis via de novo pathway; O-succinyl-L-homoserine from L-homoserine: step 1/1. Functionally, transfers a succinyl group from succinyl-CoA to L-homoserine, forming succinyl-L-homoserine. This is Homoserine O-succinyltransferase from Stutzerimonas stutzeri (strain A1501) (Pseudomonas stutzeri).